The sequence spans 362 residues: Phosphoserine aminotransferase (362 aa).

Arginine 43 is a binding site for L-glutamate. Residues 77–78 (AS), tryptophan 103, threonine 153, aspartate 173, and glutamine 196 each bind pyridoxal 5'-phosphate. An N6-(pyridoxal phosphate)lysine modification is found at lysine 197. 238–239 (NT) is a binding site for pyridoxal 5'-phosphate.

The protein belongs to the class-V pyridoxal-phosphate-dependent aminotransferase family. SerC subfamily. As to quaternary structure, homodimer. Pyridoxal 5'-phosphate is required as a cofactor.

It localises to the cytoplasm. The enzyme catalyses O-phospho-L-serine + 2-oxoglutarate = 3-phosphooxypyruvate + L-glutamate. It carries out the reaction 4-(phosphooxy)-L-threonine + 2-oxoglutarate = (R)-3-hydroxy-2-oxo-4-phosphooxybutanoate + L-glutamate. It participates in amino-acid biosynthesis; L-serine biosynthesis; L-serine from 3-phospho-D-glycerate: step 2/3. Functionally, catalyzes the reversible conversion of 3-phosphohydroxypyruvate to phosphoserine and of 3-hydroxy-2-oxo-4-phosphonooxybutanoate to phosphohydroxythreonine. The protein is Phosphoserine aminotransferase of Lysinibacillus sphaericus (strain C3-41).